Here is a 671-residue protein sequence, read N- to C-terminus: Putative ubiquitin thioesterase 232R (671 aa).

Disordered stretches follow at residues 36 to 62, 100 to 123, 171 to 203, and 250 to 319; these read EIID…RRIS, SPKI…PVRQ, NQKP…RPVF, and EPIR…SKRS. Positions 110 to 123 are enriched in low complexity; the sequence is PSPVHSPVRSPVRQ. The span at 182 to 200 shows a compositional bias: pro residues; sequence RRSPSPRRSPSPRRSPSPR. Residues 255–271 are compositionally biased toward low complexity; that stretch reads SSSSRSSRSTRRSSSTK. Over residues 272 to 319 the composition is skewed to basic residues; that stretch reads PSRRSSSRSRRSSSRSRRSSSRSRRSSSRSRRSSRRSTSRSRSLSKRS. The 130-residue stretch at 392–521 folds into the OTU domain; sequence FRMINVPLDG…NFHYIALEPF (130 aa). Asp-400 is a catalytic residue. Residue Cys-403 is the Nucleophile of the active site. His-514 is an active-site residue. The tract at residues 589–625 is disordered; that stretch reads KRSLRPSIPPKISTEHRRTPKLRPSVPRPSSIRQSQP.

It carries out the reaction Thiol-dependent hydrolysis of ester, thioester, amide, peptide and isopeptide bonds formed by the C-terminal Gly of ubiquitin (a 76-residue protein attached to proteins as an intracellular targeting signal).. In terms of biological role, hydrolase that can remove conjugated ubiquitin from proteins and may therefore play an important regulatory role at the level of protein turnover by preventing degradation. The chain is Putative ubiquitin thioesterase 232R from Acheta domesticus (House cricket).